Here is a 235-residue protein sequence, read N- to C-terminus: Isopentenyl-diphosphate Delta-isomerase I (235 aa).

A substrate-binding site is contributed by lysine 38. Residues histidine 42 and histidine 54 each coordinate Mg(2+). The Nudix hydrolase domain maps to 52–204 (LLHRAFSVFL…GLKLSPWFRL (153 aa)). Arginine 73 and lysine 77 together coordinate substrate. Cysteine 89 is an active-site residue. Residue serine 90 coordinates substrate. Residues glutamate 149 and glutamate 151 each contribute to the Mg(2+) site. Residue glutamate 151 is part of the active site.

This sequence belongs to the IPP isomerase type 1 family. Mg(2+) serves as cofactor.

It catalyses the reaction isopentenyl diphosphate = dimethylallyl diphosphate. It functions in the pathway isoprenoid biosynthesis; dimethylallyl diphosphate biosynthesis; dimethylallyl diphosphate from isopentenyl diphosphate: step 1/1. Its pathway is porphyrin-containing compound metabolism; chlorophyll biosynthesis. Functionally, catalyzes the 1,3-allylic rearrangement of the homoallylic substrate isopentenyl (IPP) to its highly electrophilic allylic isomer, dimethylallyl diphosphate (DMAPP). The chain is Isopentenyl-diphosphate Delta-isomerase I (IPI1) from Camptotheca acuminata (Happy tree).